Consider the following 621-residue polypeptide: Signal recognition particle receptor subunit alpha homolog (621 aa).

The tract at residues M1 to K158 is SRX. The disordered stretch occupies residues H167–L217. A compositionally biased stretch (polar residues) spans D171–H183. A compositionally biased stretch (basic residues) spans K185 to K198. Position 239 is a phosphoserine (S239). The tract at residues Y398 to M620 is NG domain. GTP contacts are provided by residues G404–S411 and D510–R514. The residue at position 523 (S523) is a Phosphoserine. S572–D575 contacts GTP.

The protein belongs to the GTP-binding SRP family. As to quaternary structure, heterodimer of an alpha and a beta chain.

Its subcellular location is the endoplasmic reticulum membrane. In terms of biological role, component of the SRP (signal recognition particle) receptor (SR). Ensures, in conjunction with the signal recognition particle, the correct targeting of the nascent secretory proteins to the endoplasmic reticulum membrane system. GTP hydrolysis may enhance the fidelity of and provide unidirectionality to the targeting reaction. It is important but not essential for cell growth. May be directly involved in mitochondrial protein import. This chain is Signal recognition particle receptor subunit alpha homolog (SRP101), found in Saccharomyces cerevisiae (strain ATCC 204508 / S288c) (Baker's yeast).